Reading from the N-terminus, the 288-residue chain is Proline iminopeptidase (288 aa).

Residues 27-274 enclose the AB hydrolase-1 domain; sequence PVIVLHGGPG…SAHMPYIEEP (248 aa). The active-site Nucleophile is the Ser101. Asp240 is a catalytic residue. Catalysis depends on His267, which acts as the Proton donor.

This sequence belongs to the peptidase S33 family. As to quaternary structure, monomer.

It is found in the cytoplasm. The catalysed reaction is Release of N-terminal proline from a peptide.. With respect to regulation, completely inhibited by p-chloromercuribenzoate (PCMB) and heavy metal salts. Partially inhibited by proline and proline derivatives with proline as the amino terminus. Enzyme inactivated by PCMB is reactivated by incubation with 2-mercaptoethanol. Functionally, releases the N-terminal proline from various substrates including at least dipeptides Pro-Pro, Pro-Gln, Pro-Trp and Pro-Tyr. Also acts on amides (Pro-beta NA) and oligopeptides including Pro-Leu-GlyNH2, Pro-Leu-Gly, Pro-Phe-Gly-Lys, Pro-Pro-Ala-OBut and Pro-Pro-Gly-(Pro-Pro-Gly)(4). Higher activity toward small peptides (up to three residues), but very low activity for longer peptides. Has no activity against p-nitrophenyl acetate, poly_L-proline, Met-Pro or amino acyl amides other than Pro-betaNA (Pyr-betaNA, Phe-betaNA, Cys-betaNA, Met-betaNA, Leu-betaNA, Ala-betaNA and Z-Gly-Pro-betaNA). This Heyndrickxia coagulans (Weizmannia coagulans) protein is Proline iminopeptidase (pip).